We begin with the raw amino-acid sequence, 231 residues long: 2-hydroxy-3-keto-5-methylthiopentenyl-1-phosphate phosphatase (231 aa).

Belongs to the HAD-like hydrolase superfamily. MtnX family.

The enzyme catalyses 2-hydroxy-5-methylsulfanyl-3-oxopent-1-enyl phosphate + H2O = 1,2-dihydroxy-5-(methylsulfanyl)pent-1-en-3-one + phosphate. It participates in amino-acid biosynthesis; L-methionine biosynthesis via salvage pathway; L-methionine from S-methyl-5-thio-alpha-D-ribose 1-phosphate: step 4/6. In terms of biological role, dephosphorylates 2-hydroxy-3-keto-5-methylthiopentenyl-1-phosphate (HK-MTPenyl-1-P) yielding 1,2-dihydroxy-3-keto-5-methylthiopentene (DHK-MTPene). The protein is 2-hydroxy-3-keto-5-methylthiopentenyl-1-phosphate phosphatase of Bacillus pumilus (strain SAFR-032).